A 175-amino-acid polypeptide reads, in one-letter code: CDP-archaeol synthase (175 aa).

The next 4 helical transmembrane spans lie at 41 to 61, 82 to 102, 122 to 142, and 150 to 170; these read GLFSGIFCGFIAGCIEIWLSS, LIVVLALASGALFGDMFKSFF, FVVGAWVFTYLVAPEWFVSNF, and VIIITPLLHLTTNIIGYLIGV.

It belongs to the CDP-archaeol synthase family. The cofactor is Mg(2+).

The protein resides in the cell membrane. It catalyses the reaction 2,3-bis-O-(geranylgeranyl)-sn-glycerol 1-phosphate + CTP + H(+) = CDP-2,3-bis-O-(geranylgeranyl)-sn-glycerol + diphosphate. It functions in the pathway membrane lipid metabolism; glycerophospholipid metabolism. Functionally, catalyzes the formation of CDP-2,3-bis-(O-geranylgeranyl)-sn-glycerol (CDP-archaeol) from 2,3-bis-(O-geranylgeranyl)-sn-glycerol 1-phosphate (DGGGP) and CTP. This reaction is the third ether-bond-formation step in the biosynthesis of archaeal membrane lipids. This is CDP-archaeol synthase from Methanosarcina barkeri (strain Fusaro / DSM 804).